We begin with the raw amino-acid sequence, 601 residues long: ATP-dependent lipid A-core flippase (601 aa).

5 helical membrane-spanning segments follow: residues 33 to 53 (CVAV…AKLI), 72 to 92 (VSLM…LSEY), 158 to 178 (VIGL…VFLV), 255 to 275 (LGGG…LYVV), and 283 to 303 (TITP…LSPI). In terms of domain architecture, ABC transmembrane type-1 spans 34-315 (VAVVAMIAYA…LSQVVSVMQR (282 aa)). An ABC transporter domain is found at 347 to 583 (IEYRHVSLVY…RGGYADLYAM (237 aa)). 381–388 (GQSGSGKT) contributes to the ATP binding site.

Belongs to the ABC transporter superfamily. Lipid exporter (TC 3.A.1.106) family. As to quaternary structure, homodimer.

The protein localises to the cell inner membrane. The enzyme catalyses ATP + H2O + lipid A-core oligosaccharideSide 1 = ADP + phosphate + lipid A-core oligosaccharideSide 2.. Its function is as follows. Involved in lipopolysaccharide (LPS) biosynthesis. Translocates lipid A-core from the inner to the outer leaflet of the inner membrane. Transmembrane domains (TMD) form a pore in the inner membrane and the ATP-binding domain (NBD) is responsible for energy generation. The polypeptide is ATP-dependent lipid A-core flippase (Methylococcus capsulatus (strain ATCC 33009 / NCIMB 11132 / Bath)).